The following is a 227-amino-acid chain: LexA repressor (227 aa).

The H-T-H motif DNA-binding region spans 26–46 (FDEMKEALDLASKSGIHRLIT). Catalysis depends on for autocatalytic cleavage activity residues S147 and K185.

The protein belongs to the peptidase S24 family. Homodimer.

The enzyme catalyses Hydrolysis of Ala-|-Gly bond in repressor LexA.. In terms of biological role, represses a number of genes involved in the response to DNA damage (SOS response), including recA and lexA. In the presence of single-stranded DNA, RecA interacts with LexA causing an autocatalytic cleavage which disrupts the DNA-binding part of LexA, leading to derepression of the SOS regulon and eventually DNA repair. The polypeptide is LexA repressor (Hyphomonas neptunium (strain ATCC 15444)).